The primary structure comprises 285 residues: MSSLSDQLSSFKKKVANQPIYAKPQPRQPASPTPTAYLNSNDGHSSAASSPGSYSLKKKRSKTSLVYSQPADSGVGTHYLSQLHYAVEYLKERNEPKTAEEIASYLSTPLTPMLLNLLKKNNRIYYDERNETFTFKPLHNIRSGAGLLAYLDSQKTHVGMSIKELRDGWPNVTVELEELEKQGEVLLLRTRKDGVPKMVWRNDKSCDCHVDKEFQQVWHEIPIPPTLDLASELGKYGLKPTSVDPSTVKRAGHNQTPKQKKPKTRRGKITNTHLNILRDYSSMKP.

2 stretches are compositionally biased toward polar residues: residues 1–10 (MSSLSDQLSS) and 33–44 (TPTAYLNSNDGH). Residues 1-56 (MSSLSDQLSSFKKKVANQPIYAKPQPRQPASPTPTAYLNSNDGHSSAASSPGSYSL) form a disordered region. A compositionally biased stretch (low complexity) spans 45–55 (SSAASSPGSYS). Positions 67 to 142 (YSQPADSGVG…FTFKPLHNIR (76 aa)) form a DNA-binding region, TFIIE beta. Residues 240–272 (PTSVDPSTVKRAGHNQTPKQKKPKTRRGKITNT) are disordered. Over residues 258–268 (KQKKPKTRRGK) the composition is skewed to basic residues.

It belongs to the TFIIE beta subunit family. TFIIE is a tetramer of two alpha (tfa1) and two beta (tfa2) subunits. TFIIE associates with RNA polymerase II via the beta subunit.

The protein resides in the nucleus. Recruits TFIIH to the initiation complex and stimulates the RNA polymerase II C-terminal domain kinase and DNA-dependent ATPase activities of TFIIH. Both TFIIH and TFIIE are required for promoter clearance by RNA polymerase. The protein is Transcription initiation factor IIE subunit beta (tfa2) of Schizosaccharomyces pombe (strain 972 / ATCC 24843) (Fission yeast).